A 58-amino-acid chain; its full sequence is MEAMKMKMMVFIMVVAVAFSAATAATVEAPAPSPTSDAAMFVPALFASVVALASGFIF.

The N-terminal stretch at 1 to 24 (MEAMKMKMMVFIMVVAVAFSAATA) is a signal peptide. 4-hydroxyproline occurs at positions 30, 32, and 34. Pro30, Pro32, and Pro34 each carry an O-linked (Ara...) hydroxyproline glycan. Ser36 is lipidated: GPI-anchor amidated serine. Positions 37 to 58 (DAAMFVPALFASVVALASGFIF) are cleaved as a propeptide — removed in mature form.

It belongs to the AG-peptide AGP family. Contains 4-hydroxyproline; hydroxylated on Pro-30, Pro-32 and Pro-34. Post-translationally, O-glycosylated on hydroxyprolines; noncontiguous hydroxylproline residues are glycosylated with arabinogalactan.

It localises to the cell membrane. In terms of biological role, proteoglycan that seems to be implicated in diverse developmental roles such as differentiation, cell-cell recognition, embryogenesis and programmed cell death. The protein is Arabinogalactan protein 21 of Arabidopsis thaliana (Mouse-ear cress).